The following is a 197-amino-acid chain: Imidazoleglycerol-phosphate dehydratase (197 aa).

Belongs to the imidazoleglycerol-phosphate dehydratase family.

Its subcellular location is the cytoplasm. The catalysed reaction is D-erythro-1-(imidazol-4-yl)glycerol 3-phosphate = 3-(imidazol-4-yl)-2-oxopropyl phosphate + H2O. Its pathway is amino-acid biosynthesis; L-histidine biosynthesis; L-histidine from 5-phospho-alpha-D-ribose 1-diphosphate: step 6/9. This is Imidazoleglycerol-phosphate dehydratase from Methylocella silvestris (strain DSM 15510 / CIP 108128 / LMG 27833 / NCIMB 13906 / BL2).